The sequence spans 37 residues: Conotoxin Bt1.8 (37 aa).

A propeptide spanning residues 1–20 (PDGRNAAAKAFDLITPTVRK) is cleaved from the precursor. Disulfide bonds link Cys22/Cys28 and Cys23/Cys36. Cys36 carries the cysteine amide modification.

The protein belongs to the conotoxin A superfamily. As to expression, expressed by the venom duct.

The protein resides in the secreted. Alpha-conotoxins bind to the nicotinic acetylcholine receptors (nAChR) and inhibit them. This toxin inhibits mammalian alpha-3-beta-2/CHRNA3-CHRNB2 nAChR (IC(50)=9.4 nM (rat), IC(50)=8.8 nM (human)), as well as the subunit chimera alpha-6/alpha-3-beta-2-beta-3 nAChR (CHRNA6/CHRNA3-CHRNB2-CHRNB3)(IC(50)=2.1 nM (rat), IC(50)=1.7 nM (human)). Binds to rat alpha-6/alpha-3-beta-2-beta-3 more rapidly than to alpha-3-beta-2, and dissociates more rapidly from alpha-3-beta-2 than from alpha-6/alpha-3-beta-2-beta-3. This Conus betulinus (Beech cone) protein is Conotoxin Bt1.8.